We begin with the raw amino-acid sequence, 89 residues long: UPF0335 protein Caul_0876 (89 aa).

It belongs to the UPF0335 family.

The chain is UPF0335 protein Caul_0876 from Caulobacter sp. (strain K31).